A 373-amino-acid chain; its full sequence is UDP-N-acetylglucosamine--N-acetylmuramyl-(pentapeptide) pyrophosphoryl-undecaprenol N-acetylglucosamine transferase (373 aa).

UDP-N-acetyl-alpha-D-glucosamine-binding positions include 16 to 18 (TGG), Asn128, Arg164, Ser192, Ile250, and Gln295.

Belongs to the glycosyltransferase 28 family. MurG subfamily.

The protein localises to the cell inner membrane. The catalysed reaction is di-trans,octa-cis-undecaprenyl diphospho-N-acetyl-alpha-D-muramoyl-L-alanyl-D-glutamyl-meso-2,6-diaminopimeloyl-D-alanyl-D-alanine + UDP-N-acetyl-alpha-D-glucosamine = di-trans,octa-cis-undecaprenyl diphospho-[N-acetyl-alpha-D-glucosaminyl-(1-&gt;4)]-N-acetyl-alpha-D-muramoyl-L-alanyl-D-glutamyl-meso-2,6-diaminopimeloyl-D-alanyl-D-alanine + UDP + H(+). It functions in the pathway cell wall biogenesis; peptidoglycan biosynthesis. In terms of biological role, cell wall formation. Catalyzes the transfer of a GlcNAc subunit on undecaprenyl-pyrophosphoryl-MurNAc-pentapeptide (lipid intermediate I) to form undecaprenyl-pyrophosphoryl-MurNAc-(pentapeptide)GlcNAc (lipid intermediate II). The polypeptide is UDP-N-acetylglucosamine--N-acetylmuramyl-(pentapeptide) pyrophosphoryl-undecaprenol N-acetylglucosamine transferase (Paraburkholderia phymatum (strain DSM 17167 / CIP 108236 / LMG 21445 / STM815) (Burkholderia phymatum)).